Consider the following 454-residue polypeptide: F-box/WD-40 repeat-containing protein At3g52030 (454 aa).

In terms of domain architecture, F-box spans 20 to 66 (PTSIESLDADILCIIFSFLDLFDLVHCTVVCNSWNAVIKRLKLLQAS). 8 WD repeats span residues 85–116 (DRPAEIDVEDFAMKHHKMALLRGRIEIERWEA), 117–153 (HSHRVSQCRMKKGLLLTGVGDKVMRLWSLKSYKCMEE), 170–214 (SKKL…SIFP), 215–255 (SRAG…CSQI), 258–296 (TQGGPITCLSLSDNQLFLSGSSLGRVTVSDPLMDQPVAT), 301–340 (ITAGGIQTICFNQGTNLAFIGTTGGYVSCWDLRKMDRLWE), 343–383 (VSPN…VLSR), and 422–454 (KVRPQISCIAMGMKKMVTAHNGKCISVWKFNLS).

The chain is F-box/WD-40 repeat-containing protein At3g52030 from Arabidopsis thaliana (Mouse-ear cress).